Here is a 162-residue protein sequence, read N- to C-terminus: Ribosome maturation factor RimP (162 aa).

This sequence belongs to the RimP family.

The protein resides in the cytoplasm. Required for maturation of 30S ribosomal subunits. The protein is Ribosome maturation factor RimP of Leptospira interrogans serogroup Icterohaemorrhagiae serovar copenhageni (strain Fiocruz L1-130).